A 213-amino-acid chain; its full sequence is Thiamine-phosphate synthase (213 aa).

4-amino-2-methyl-5-(diphosphooxymethyl)pyrimidine contacts are provided by residues 41–45 (QFRVK) and N73. Residues D74 and D93 each contribute to the Mg(2+) site. A 4-amino-2-methyl-5-(diphosphooxymethyl)pyrimidine-binding site is contributed by T112. A 2-[(2R,5Z)-2-carboxy-4-methylthiazol-5(2H)-ylidene]ethyl phosphate-binding site is contributed by 139-141 (SAT). Residue K142 participates in 4-amino-2-methyl-5-(diphosphooxymethyl)pyrimidine binding. G171 provides a ligand contact to 2-[(2R,5Z)-2-carboxy-4-methylthiazol-5(2H)-ylidene]ethyl phosphate.

It belongs to the thiamine-phosphate synthase family. It depends on Mg(2+) as a cofactor.

It catalyses the reaction 2-[(2R,5Z)-2-carboxy-4-methylthiazol-5(2H)-ylidene]ethyl phosphate + 4-amino-2-methyl-5-(diphosphooxymethyl)pyrimidine + 2 H(+) = thiamine phosphate + CO2 + diphosphate. The catalysed reaction is 2-(2-carboxy-4-methylthiazol-5-yl)ethyl phosphate + 4-amino-2-methyl-5-(diphosphooxymethyl)pyrimidine + 2 H(+) = thiamine phosphate + CO2 + diphosphate. The enzyme catalyses 4-methyl-5-(2-phosphooxyethyl)-thiazole + 4-amino-2-methyl-5-(diphosphooxymethyl)pyrimidine + H(+) = thiamine phosphate + diphosphate. It participates in cofactor biosynthesis; thiamine diphosphate biosynthesis; thiamine phosphate from 4-amino-2-methyl-5-diphosphomethylpyrimidine and 4-methyl-5-(2-phosphoethyl)-thiazole: step 1/1. Condenses 4-methyl-5-(beta-hydroxyethyl)thiazole monophosphate (THZ-P) and 2-methyl-4-amino-5-hydroxymethyl pyrimidine pyrophosphate (HMP-PP) to form thiamine monophosphate (TMP). This is Thiamine-phosphate synthase from Erythrobacter litoralis (strain HTCC2594).